We begin with the raw amino-acid sequence, 434 residues long: Xylose isomerase (434 aa).

Residues H99 and D102 contribute to the active site. Residues E230, E266, H269, D294, D305, D307, and D337 each coordinate Mg(2+).

The protein belongs to the xylose isomerase family. As to quaternary structure, homotetramer. Mg(2+) serves as cofactor.

It is found in the cytoplasm. The catalysed reaction is alpha-D-xylose = alpha-D-xylulofuranose. The chain is Xylose isomerase from Dinoroseobacter shibae (strain DSM 16493 / NCIMB 14021 / DFL 12).